A 235-amino-acid chain; its full sequence is MKIKRSFISISVLMVIFGLMISVQFNSLKHPKVRDTRDMWDIREELTSEQKKQEKLLAEINKYDKLLNSYSQTKEMTKETALNNTLQSLKKTAGMTDITGSGIVITISPLFSESLTGEPIENPPPDLLKKLINELNSYGAEHISINERRVVNHTVIRDINGTTKIDGYALDDYPLTVKVLAKDPDMLHSRVKGSGLEDLFASENLALKAGKSESKLTLKAYDRPLDVQQLKLLKD.

The chain crosses the membrane as a helical span at residues Ser6–Asn26.

The protein belongs to the UPF0749 family.

The protein localises to the cell membrane. The chain is UPF0749 protein YlxX (ylxX) from Bacillus subtilis (strain 168).